Reading from the N-terminus, the 506-residue chain is Probable UTP--glucose-1-phosphate uridylyltransferase (506 aa).

2 positions are modified to phosphoserine: serine 15 and serine 17. Residues 115–118 (LNGG), lysine 129, glutamine 192, and glycine 221 contribute to the UTP site. Residue 117–118 (GG) participates in substrate binding. Residue lysine 129 coordinates Mg(2+). Substrate-binding positions include histidine 222 and 250-252 (NID). Positions 252 and 394 each coordinate UTP. Residue aspartate 252 coordinates Mg(2+). Residue lysine 394 is part of the active site. Residues 455 to 506 (HLTITGDVNIGRNVTLKGTVIIVASDANRIDIPNGSVLENCVITGNLNILEH) are oligomerization.

This sequence belongs to the UDPGP type 1 family. Homooctamer.

The protein localises to the cytoplasm. It is found in the nucleus. The enzyme catalyses alpha-D-glucose 1-phosphate + UTP + H(+) = UDP-alpha-D-glucose + diphosphate. Its function is as follows. Plays a central role as a glucosyl donor in cellular metabolic pathways. This Schizosaccharomyces pombe (strain 972 / ATCC 24843) (Fission yeast) protein is Probable UTP--glucose-1-phosphate uridylyltransferase (fyu1).